We begin with the raw amino-acid sequence, 82 residues long: U-scoloptoxin(21)-Sm3a (82 aa).

A signal peptide spans 1–21 (MKIIALLLMVFLDFIIVNXAE).

Belongs to the scoloptoxin-21 family. In terms of tissue distribution, expressed by the venom gland.

It is found in the secreted. The protein is U-scoloptoxin(21)-Sm3a of Scolopendra morsitans (Tanzanian blue ringleg centipede).